A 165-amino-acid chain; its full sequence is 2-C-methyl-D-erythritol 2,4-cyclodiphosphate synthase (165 aa).

A divalent metal cation-binding residues include Asp-13 and His-15. Residues 13–15 (DRH) and 39–40 (HS) contribute to the 4-CDP-2-C-methyl-D-erythritol 2-phosphate site. An a divalent metal cation-binding site is contributed by His-47. Residues 61 to 63 (DIG) and Phe-141 contribute to the 4-CDP-2-C-methyl-D-erythritol 2-phosphate site.

It belongs to the IspF family. Homotrimer. A divalent metal cation serves as cofactor.

It catalyses the reaction 4-CDP-2-C-methyl-D-erythritol 2-phosphate = 2-C-methyl-D-erythritol 2,4-cyclic diphosphate + CMP. It participates in isoprenoid biosynthesis; isopentenyl diphosphate biosynthesis via DXP pathway; isopentenyl diphosphate from 1-deoxy-D-xylulose 5-phosphate: step 4/6. Involved in the biosynthesis of isopentenyl diphosphate (IPP) and dimethylallyl diphosphate (DMAPP), two major building blocks of isoprenoid compounds. Catalyzes the conversion of 4-diphosphocytidyl-2-C-methyl-D-erythritol 2-phosphate (CDP-ME2P) to 2-C-methyl-D-erythritol 2,4-cyclodiphosphate (ME-CPP) with a corresponding release of cytidine 5-monophosphate (CMP). This chain is 2-C-methyl-D-erythritol 2,4-cyclodiphosphate synthase, found in Thermotoga neapolitana (strain ATCC 49049 / DSM 4359 / NBRC 107923 / NS-E).